Consider the following 684-residue polypeptide: Suppressor of presenilin protein 3 (684 aa).

C2H2-type zinc fingers lie at residues 21 to 43 (YKCHLCGQCFYRGCGLASHLRRH), 48 to 71 (FDCEHCAYTCKHKYAYDRHLLQSH), 123 to 145 (YKCPLCISTFGSHARAVYHILSH), 261 to 283 (YLCRNCPYVSWNVSSLWRHFRHH), and 291 to 313 (WTCIACSYSSSSRVKIDLHVKMH). Disordered stretches follow at residues 337–359 (DLNKPTNKKKKPDGGNGSNHSDM), 419–440 (KNNSNPTVLPNKRNSIKTSKSD), and 469–501 (TSKFYRPESPDSLASNNSAHGDEIESTSSDQFQ). C2H2-type zinc fingers lie at residues 590-612 (RECTDCPFKHNDLQQFRLHRDKH) and 618-641 (HTCPECNYSSNNHNQVVEHTFVDH). The interval 652-684 (LPSSDSEDDNIPVPPDTPQRKKKAPKRGKRRGW) is disordered. Basic residues predominate over residues 671–684 (RKKKAPKRGKRRGW).

The protein localises to the nucleus. Functionally, probable transcriptional regulator, which participates in the transcriptional repression of the presenilin protein hop-1. This is Suppressor of presenilin protein 3 (spr-3) from Caenorhabditis elegans.